Here is a 221-residue protein sequence, read N- to C-terminus: 5-methylthioribulose-1-phosphate/5-deoxyribulose-1-phosphate aldolase (221 aa).

E75 acts as the Proton donor/acceptor in catalysis. Co(2+)-binding residues include E75, H94, H96, and H157.

Belongs to the aldolase class II family. Co(2+) is required as a cofactor.

The catalysed reaction is 5-(methylsulfanyl)-D-ribulose 1-phosphate = 2-(methylsulfanyl)acetaldehyde + dihydroxyacetone phosphate. It catalyses the reaction 5-deoxy-D-ribulose 1-phosphate = dihydroxyacetone phosphate + acetaldehyde. The protein operates within amino-acid biosynthesis; L-methionine biosynthesis via salvage pathway. Functionally, uses 5-methylthioribulose-1-phosphate to yield 2-(methylthio)acetaldehyde and dihydroxyacetone phosphate. Can also use 5-deoxyribulose 1-phosphate to yield acetaldehyde and dihydroxyacetone phosphate. Part of a bifunctional DHAP-shunt salvage pathway for SAM by-products. This is 5-methylthioribulose-1-phosphate/5-deoxyribulose-1-phosphate aldolase from Rhodospirillum rubrum (strain ATCC 11170 / ATH 1.1.1 / DSM 467 / LMG 4362 / NCIMB 8255 / S1).